Consider the following 158-residue polypeptide: Small ribosomal subunit protein uS9 (158 aa).

The span at Met-1–Gln-10 shows a compositional bias: polar residues. Positions Met-1–Tyr-35 are disordered. A compositionally biased stretch (basic and acidic residues) spans Ala-21–Gly-32.

The protein belongs to the universal ribosomal protein uS9 family.

This is Small ribosomal subunit protein uS9 from Afipia carboxidovorans (strain ATCC 49405 / DSM 1227 / KCTC 32145 / OM5) (Oligotropha carboxidovorans).